The chain runs to 214 residues: Imidazole glycerol phosphate synthase subunit HisH (214 aa).

The Glutamine amidotransferase type-1 domain occupies 3–211; the sequence is TIAVIDYDMG…VSKVIPKNLA (209 aa). The Nucleophile role is filled by C81. Residues H186 and E188 contribute to the active site.

As to quaternary structure, heterodimer of HisH and HisF.

The protein localises to the cytoplasm. It catalyses the reaction 5-[(5-phospho-1-deoxy-D-ribulos-1-ylimino)methylamino]-1-(5-phospho-beta-D-ribosyl)imidazole-4-carboxamide + L-glutamine = D-erythro-1-(imidazol-4-yl)glycerol 3-phosphate + 5-amino-1-(5-phospho-beta-D-ribosyl)imidazole-4-carboxamide + L-glutamate + H(+). It carries out the reaction L-glutamine + H2O = L-glutamate + NH4(+). The protein operates within amino-acid biosynthesis; L-histidine biosynthesis; L-histidine from 5-phospho-alpha-D-ribose 1-diphosphate: step 5/9. Functionally, IGPS catalyzes the conversion of PRFAR and glutamine to IGP, AICAR and glutamate. The HisH subunit catalyzes the hydrolysis of glutamine to glutamate and ammonia as part of the synthesis of IGP and AICAR. The resulting ammonia molecule is channeled to the active site of HisF. The protein is Imidazole glycerol phosphate synthase subunit HisH of Trichodesmium erythraeum (strain IMS101).